Here is a 301-residue protein sequence, read N- to C-terminus: MLHHKFVYPFLFKWHLSCVEKCPPQITFIAKYATANDKNGNRKLTIRDEQWPELADPTPYDIFGIPKAGSGNPKLDKKSLKKKYHRYVKLYHPDHSDNIQIFSSEKVTNSDSKSPLLLTSSEKLHRFKVISQAYDILCDPKKKIVYDTTRQGWTTSYSPRSNVNTENYQYAGSYGYHSNAQYEYWNAGTWEDANSMKNERIQENINPWTVIGIICGLAICIEGTALLAKIQESLSKAEFTHDESGLHLIQSYTNYGLDTDKFSRLRRFLWFRTWGLYKSKEDLDREAKINEEMIRKLKAAK.

The 93-residue stretch at 58–150 folds into the J domain; sequence TPYDIFGIPK…KKKIVYDTTR (93 aa). Residues 208 to 228 traverse the membrane as a helical segment; sequence WTVIGIICGLAICIEGTALLA.

The protein belongs to the DnaJ family.

It localises to the mitochondrion membrane. Its function is as follows. Probable chaperone. The polypeptide is J domain-containing protein 1 (JID1) (Saccharomyces cerevisiae (strain ATCC 204508 / S288c) (Baker's yeast)).